The chain runs to 1112 residues: Carbamoyl phosphate synthase large chain (1112 aa).

A carboxyphosphate synthetic domain region spans residues 1–407 (MPRRTDLRHV…ALGKVMRSLE (407 aa)). Positions 134, 174, 180, 181, 213, 215, 220, 246, 247, 248, 290, and 304 each coordinate ATP. An ATP-grasp 1 domain is found at 138 to 333 (KDIVTKVGGE…IAKIAAKLAI (196 aa)). Mg(2+)-binding residues include glutamine 290, glutamate 304, and asparagine 306. Positions 290, 304, and 306 each coordinate Mn(2+). Residues 408 to 559 (TGRAGFWTAP…ELDPAAESEV (152 aa)) are oligomerization domain. The tract at residues 560–965 (APQAERPKVL…AFAKSQTAAY (406 aa)) is carbamoyl phosphate synthetic domain. Positions 693 to 884 (GEVLRTAGLP…LAKACARIML (192 aa)) constitute an ATP-grasp 2 domain. Residues arginine 729, arginine 768, leucine 770, glutamate 775, glycine 800, isoleucine 801, histidine 802, serine 803, glutamine 843, and glutamate 855 each contribute to the ATP site. Mg(2+)-binding residues include glutamine 843, glutamate 855, and asparagine 857. 3 residues coordinate Mn(2+): glutamine 843, glutamate 855, and asparagine 857. The 147-residue stretch at 966 to 1112 (GSLPSEGTVF…LQELHSELGN (147 aa)) folds into the MGS-like domain. Residues 966–1112 (GSLPSEGTVF…LQELHSELGN (147 aa)) form an allosteric domain region.

The protein belongs to the CarB family. As to quaternary structure, composed of two chains; the small (or glutamine) chain promotes the hydrolysis of glutamine to ammonia, which is used by the large (or ammonia) chain to synthesize carbamoyl phosphate. Tetramer of heterodimers (alpha,beta)4. Mg(2+) is required as a cofactor. Requires Mn(2+) as cofactor.

It carries out the reaction hydrogencarbonate + L-glutamine + 2 ATP + H2O = carbamoyl phosphate + L-glutamate + 2 ADP + phosphate + 2 H(+). The catalysed reaction is hydrogencarbonate + NH4(+) + 2 ATP = carbamoyl phosphate + 2 ADP + phosphate + 2 H(+). It functions in the pathway amino-acid biosynthesis; L-arginine biosynthesis; carbamoyl phosphate from bicarbonate: step 1/1. The protein operates within pyrimidine metabolism; UMP biosynthesis via de novo pathway; (S)-dihydroorotate from bicarbonate: step 1/3. Functionally, large subunit of the glutamine-dependent carbamoyl phosphate synthetase (CPSase). CPSase catalyzes the formation of carbamoyl phosphate from the ammonia moiety of glutamine, carbonate, and phosphate donated by ATP, constituting the first step of 2 biosynthetic pathways, one leading to arginine and/or urea and the other to pyrimidine nucleotides. The large subunit (synthetase) binds the substrates ammonia (free or transferred from glutamine from the small subunit), hydrogencarbonate and ATP and carries out an ATP-coupled ligase reaction, activating hydrogencarbonate by forming carboxy phosphate which reacts with ammonia to form carbamoyl phosphate. In Mycobacterium sp. (strain JLS), this protein is Carbamoyl phosphate synthase large chain.